Reading from the N-terminus, the 402-residue chain is tRNA(Met) cytidine acetate ligase (402 aa).

ATP-binding positions include 7–20, Gly102, Asn171, and Arg196; that span reads IAEYNPMHNGHIHH.

Belongs to the TmcAL family.

Its subcellular location is the cytoplasm. It carries out the reaction cytidine(34) in elongator tRNA(Met) + acetate + ATP = N(4)-acetylcytidine(34) in elongator tRNA(Met) + AMP + diphosphate. Catalyzes the formation of N(4)-acetylcytidine (ac(4)C) at the wobble position of elongator tRNA(Met), using acetate and ATP as substrates. First activates an acetate ion to form acetyladenylate (Ac-AMP) and then transfers the acetyl group to tRNA to form ac(4)C34. The sequence is that of tRNA(Met) cytidine acetate ligase from Clostridium acetobutylicum (strain ATCC 824 / DSM 792 / JCM 1419 / IAM 19013 / LMG 5710 / NBRC 13948 / NRRL B-527 / VKM B-1787 / 2291 / W).